A 72-amino-acid chain; its full sequence is Protein RALF-like 11 (72 aa).

Residues 1-17 form the signal peptide; it reads MKAWLICLLVICAAVIA. Cystine bridges form between Cys34–Cys43 and Cys63–Cys69.

This sequence belongs to the plant rapid alkalinization factor (RALF) family.

It localises to the secreted. In terms of biological role, cell signaling peptide that may regulate plant stress, growth, and development. Mediates a rapid alkalinization of extracellular space by mediating a transient increase in the cytoplasmic Ca(2+) concentration leading to a calcium-dependent signaling events through a cell surface receptor and a concomitant activation of some intracellular mitogen-activated protein kinases. The polypeptide is Protein RALF-like 11 (RALFL11) (Arabidopsis thaliana (Mouse-ear cress)).